The primary structure comprises 461 residues: CBL-interacting protein kinase 5 (461 aa).

Residues 12-266 (YELGRMLGQG…VEKLVEHPWF (255 aa)) form the Protein kinase domain. ATP contacts are provided by residues 18-26 (LGQGTFAKV) and Lys41. Asp134 serves as the catalytic Proton acceptor. An activation loop region spans residues 152-181 (DFGLSAFKECQKQDGLLHTTCGTPAYVAPE). In terms of domain architecture, NAF spans 300-334 (EGKAKEPASSLKPVSLNAFDIISLSKGFDLSGLFE). Positions 340–369 (KADSRFMTQKPASAIVSKLEQIAETESFKV) are PPI. The disordered stretch occupies residues 440-461 (HPSLAQSSTLTQSSKSISRHAI). The segment covering 442–455 (SLAQSSTLTQSSKS) has biased composition (low complexity).

It belongs to the protein kinase superfamily. CAMK Ser/Thr protein kinase family. SNF1 subfamily. Mn(2+) is required as a cofactor.

The enzyme catalyses L-seryl-[protein] + ATP = O-phospho-L-seryl-[protein] + ADP + H(+). It carries out the reaction L-threonyl-[protein] + ATP = O-phospho-L-threonyl-[protein] + ADP + H(+). In terms of biological role, CIPK serine-threonine protein kinases interact with CBL proteins. Binding of a CBL protein to the regulatory NAF domain of CIPK protein lead to the activation of the kinase in a calcium-dependent manner. The sequence is that of CBL-interacting protein kinase 5 (CIPK5) from Oryza sativa subsp. japonica (Rice).